A 78-amino-acid chain; its full sequence is Acyl carrier protein (78 aa).

Residues 2–77 (SDIAERVKKI…DAVKFIEKAQ (76 aa)) enclose the Carrier domain. Serine 37 is subject to O-(pantetheine 4'-phosphoryl)serine.

This sequence belongs to the acyl carrier protein (ACP) family. In terms of processing, 4'-phosphopantetheine is transferred from CoA to a specific serine of apo-ACP by AcpS. This modification is essential for activity because fatty acids are bound in thioester linkage to the sulfhydryl of the prosthetic group.

It is found in the cytoplasm. It functions in the pathway lipid metabolism; fatty acid biosynthesis. In terms of biological role, carrier of the growing fatty acid chain in fatty acid biosynthesis. The chain is Acyl carrier protein from Sinorhizobium fredii (strain NBRC 101917 / NGR234).